The following is a 299-amino-acid chain: Pyrroline-5-carboxylate reductase 2 (299 aa).

This sequence belongs to the pyrroline-5-carboxylate reductase family. In terms of assembly, homodecamer; composed of 5 homodimers.

It catalyses the reaction L-proline + NADP(+) = (S)-1-pyrroline-5-carboxylate + NADPH + 2 H(+). The enzyme catalyses L-proline + NAD(+) = (S)-1-pyrroline-5-carboxylate + NADH + 2 H(+). It participates in amino-acid biosynthesis; L-proline biosynthesis; L-proline from L-glutamate 5-semialdehyde: step 1/1. The chain is Pyrroline-5-carboxylate reductase 2 (pycr2) from Dictyostelium discoideum (Social amoeba).